Consider the following 548-residue polypeptide: 5-aminolevulinate synthase, mitochondrial (548 aa).

A mitochondrion-targeting transit peptide spans 1–22; the sequence is MQRSIFARFGNSSAAVSTLNRL. 3 residues coordinate substrate: arginine 91, serine 204, and lysine 223. Serine 256, histidine 284, and threonine 334 together coordinate pyridoxal 5'-phosphate. Lysine 337 is an active-site residue. N6-(pyridoxal phosphate)lysine is present on lysine 337. Residues threonine 366 and threonine 367 each coordinate pyridoxal 5'-phosphate. Residue threonine 452 coordinates substrate.

This sequence belongs to the class-II pyridoxal-phosphate-dependent aminotransferase family. Homodimer. Interacts with MCX1. It depends on pyridoxal 5'-phosphate as a cofactor.

The protein localises to the mitochondrion matrix. The enzyme catalyses succinyl-CoA + glycine + H(+) = 5-aminolevulinate + CO2 + CoA. It participates in porphyrin-containing compound metabolism; protoporphyrin-IX biosynthesis; 5-aminolevulinate from glycine: step 1/1. Its activity is regulated as follows. Ihnhibited by hemin. Catalyzes the synthesis of 5-aminolevulinate (ALA) from succinyl-CoA and glycine, the first and rate-limiting step in heme biosynthesis. This Saccharomyces cerevisiae (strain ATCC 204508 / S288c) (Baker's yeast) protein is 5-aminolevulinate synthase, mitochondrial.